We begin with the raw amino-acid sequence, 592 residues long: Arginine--tRNA ligase (592 aa).

The 'HIGH' region motif lies at 129 to 139; it reads ANPTGPLHVGH.

This sequence belongs to the class-I aminoacyl-tRNA synthetase family. In terms of assembly, monomer.

The protein resides in the cytoplasm. It catalyses the reaction tRNA(Arg) + L-arginine + ATP = L-arginyl-tRNA(Arg) + AMP + diphosphate. The polypeptide is Arginine--tRNA ligase (Dichelobacter nodosus (strain VCS1703A)).